Consider the following 431-residue polypeptide: DNA polymerase delta subunit 2 (431 aa).

It belongs to the DNA polymerase delta/II small subunit family. As to quaternary structure, component of both the DNA polymerase delta and DNA polymerase zeta complexes. The DNA polymerase delta complex consisting of three subunits: the catalytic subunit PolD1 and two accessory subunits PolD2/Pol31 and PolD3/Pol32. Within the delta complex, interacts with both PolD1 and PolD3, and is able to interact with PolD1 in the absence of PolD3. Component of the DNA polymerase zeta complex consisting of four subunits: the catalytic subunit PolZ1 and three accessory subunits PolZ2/Rev7, PolD2/Pol31 and PolD3/Pol32. Expressed in ovaries and embryos (at the protein level).

Its subcellular location is the nucleus. It is found in the nucleoplasm. In terms of biological role, accessory component of both the DNA polymerase delta complex and possibly the DNA polymerase zeta complex. As a component of the delta complex, participates in high fidelity genome replication, including lagging strand synthesis, DNA recombination and repair. Appears to promote the function of the DNA pol-delta complex accessory subunit PolD3 in both embryonic and postembryonic somatic cells. In Drosophila melanogaster (Fruit fly), this protein is DNA polymerase delta subunit 2.